A 491-amino-acid polypeptide reads, in one-letter code: Aspartyl/glutamyl-tRNA(Asn/Gln) amidotransferase subunit B (491 aa).

Belongs to the GatB/GatE family. GatB subfamily. In terms of assembly, heterotrimer of A, B and C subunits.

It catalyses the reaction L-glutamyl-tRNA(Gln) + L-glutamine + ATP + H2O = L-glutaminyl-tRNA(Gln) + L-glutamate + ADP + phosphate + H(+). The enzyme catalyses L-aspartyl-tRNA(Asn) + L-glutamine + ATP + H2O = L-asparaginyl-tRNA(Asn) + L-glutamate + ADP + phosphate + 2 H(+). Its function is as follows. Allows the formation of correctly charged Asn-tRNA(Asn) or Gln-tRNA(Gln) through the transamidation of misacylated Asp-tRNA(Asn) or Glu-tRNA(Gln) in organisms which lack either or both of asparaginyl-tRNA or glutaminyl-tRNA synthetases. The reaction takes place in the presence of glutamine and ATP through an activated phospho-Asp-tRNA(Asn) or phospho-Glu-tRNA(Gln). This Burkholderia multivorans (strain ATCC 17616 / 249) protein is Aspartyl/glutamyl-tRNA(Asn/Gln) amidotransferase subunit B.